A 1154-amino-acid polypeptide reads, in one-letter code: BEACH domain-containing protein lvsF (1154 aa).

Disordered regions lie at residues 92–123 and 139–167; these read HLPTPQPIPQSILSPSKPTPTPTPPIVVEQPS and TSKVTTPTPPTPTPTPPTPQPTSIAPTPT. Over residues 145 to 158 the composition is skewed to pro residues; it reads PTPPTPTPTPPTPQ. The region spanning 289–384 is the BEACH-type PH domain; the sequence is DMNERNILEL…TRNQVYDLLV (96 aa). The BEACH domain occupies 389 to 697; it reads TNIMHINEQA…QIFKTPHPQR (309 aa). 3 disordered regions span residues 554–575, 739–762, and 779–825; these read SFESSSSSRNGGGGDDDDNFEN, NNLNNNNNNNNNNNSNSNSNLNNN, and NSLN…ENLN. 2 stretches are compositionally biased toward low complexity: residues 779 to 788 and 795 to 822; these read NSLNNENNEN and NSNSNSSDNIKNSNGFENNDNNFNNENE. WD repeat units follow at residues 858–897, 900–939, 942–980, 992–1031, 1034–1074, 1076–1110, and 1119–1154; these read LHKDKISALYLSNNSETIYSVSLDSCLKIYSLKEKRQIRS, LCNLALSSFQLSKDEKYIIIGSWDNNIYVYSVGNGSISYS, GHSDAVSCLKLHNNNILVSGSWDSSVKVWRTHRQSNGAI, DSDTEIRSIDISSNGTIFCAGSSDGYLYFYDLLTLQLIRR, CFFD…FSFK, KGEIHCLDSDGSSLIIGTDRGLCLWSLTTGTEIKD, and SSNESIHSLNVSINQSSNKPILLTGTEAGSISIWQQ.

The protein is BEACH domain-containing protein lvsF (lvsF) of Dictyostelium discoideum (Social amoeba).